A 634-amino-acid polypeptide reads, in one-letter code: Chaperone protein HtpG (634 aa).

The segment at 1 to 342 (MTVASHKETL…SNDLPLNISR (342 aa)) is a; substrate-binding. The segment at 343–559 (EILQNNRVID…QHDMSGYLER (217 aa)) is b. Positions 560 to 634 (LLKEAGQQAP…LNSLLLAMAD (75 aa)) are c.

It belongs to the heat shock protein 90 family. As to quaternary structure, homodimer.

It is found in the cytoplasm. In terms of biological role, molecular chaperone. Has ATPase activity. This Nitrosococcus oceani (strain ATCC 19707 / BCRC 17464 / JCM 30415 / NCIMB 11848 / C-107) protein is Chaperone protein HtpG.